A 179-amino-acid polypeptide reads, in one-letter code: Serglycin (179 aa).

An N-terminal signal peptide occupies residues 1 to 26; sequence MRQVPVGTRLVLALAFVLVWGSSVQG. A propeptide spans 27–75 (activation peptide); sequence YPARRARYQWVRCKPDGIFANCIEEKGPRFDLIAEESNVGPPMTDPVLM. Cys39 and Cys48 are disulfide-bonded. Residues 86-145 form a disordered region; that stretch reads SDDYSGSGSGSGSGSGSGSGSGSGSGSGSGSGSGSGSGSGSGSGSGSGSGSGSLADMEWE. Ser90 and Ser92 each carry an O-linked (Xyl...) (glycosaminoglycan) serine glycan. A run of 24 repeats spans residues 90–91, 92–93, 94–95, 96–97, 98–99, 100–101, 102–103, 104–105, 106–107, 108–109, 110–111, 112–113, 114–115, 116–117, 118–119, 120–121, 122–123, 124–125, 126–127, 128–129, 130–131, 132–133, 134–135, and 136–137. The segment at 90–137 is 24 X 2 AA tandem repeats of S-G; that stretch reads SGSGSGSGSGSGSGSGSGSGSGSGSGSGSGSGSGSGSGSGSGSGSGSG. The span at 92–136 shows a compositional bias: gly residues; it reads SGSGSGSGSGSGSGSGSGSGSGSGSGSGSGSGSGSGSGSGSGSGS. O-linked (Xyl...) (glycosaminoglycan) serine glycosylation is found at Ser96, Ser98, Ser100, Ser102, Ser104, and Ser106.

The protein belongs to the serglycin family. In terms of assembly, binds to activated CD44 and to GZMB. O-glycosylated; contains chondroitin sulfate and heparan sulfate.

The protein resides in the cytoplasmic granule. It localises to the cytolytic granule. The protein localises to the secreted. It is found in the extracellular space. Its subcellular location is the golgi apparatus. Functionally, plays a role in formation of mast cell secretory granules and mediates storage of various compounds in secretory vesicles. Required for storage of some proteases in both connective tissue and mucosal mast cells and for storage of granzyme B in T-lymphocytes. Plays a role in localizing neutrophil elastase in azurophil granules of neutrophils. Mediates processing of MMP2. Plays a role in cytotoxic cell granule-mediated apoptosis by forming a complex with granzyme B which is delivered to cells by perforin to induce apoptosis. Regulates the secretion of TNF-alpha and may also regulate protease secretion. Inhibits bone mineralization. The sequence is that of Serglycin (Srgn) from Rattus norvegicus (Rat).